The chain runs to 186 residues: Elongation factor P (186 aa).

It belongs to the elongation factor P family.

It is found in the cytoplasm. The protein operates within protein biosynthesis; polypeptide chain elongation. In terms of biological role, involved in peptide bond synthesis. Stimulates efficient translation and peptide-bond synthesis on native or reconstituted 70S ribosomes in vitro. Probably functions indirectly by altering the affinity of the ribosome for aminoacyl-tRNA, thus increasing their reactivity as acceptors for peptidyl transferase. In Cupriavidus necator (strain ATCC 17699 / DSM 428 / KCTC 22496 / NCIMB 10442 / H16 / Stanier 337) (Ralstonia eutropha), this protein is Elongation factor P.